Consider the following 250-residue polypeptide: 3-deoxy-manno-octulosonate cytidylyltransferase (250 aa).

Belongs to the KdsB family.

The protein resides in the cytoplasm. It carries out the reaction 3-deoxy-alpha-D-manno-oct-2-ulosonate + CTP = CMP-3-deoxy-beta-D-manno-octulosonate + diphosphate. The protein operates within nucleotide-sugar biosynthesis; CMP-3-deoxy-D-manno-octulosonate biosynthesis; CMP-3-deoxy-D-manno-octulosonate from 3-deoxy-D-manno-octulosonate and CTP: step 1/1. It functions in the pathway bacterial outer membrane biogenesis; lipopolysaccharide biosynthesis. Its function is as follows. Activates KDO (a required 8-carbon sugar) for incorporation into bacterial lipopolysaccharide in Gram-negative bacteria. This chain is 3-deoxy-manno-octulosonate cytidylyltransferase, found in Herminiimonas arsenicoxydans.